The chain runs to 290 residues: Poly-beta-1,6-N-acetyl-D-glucosamine N-deacetylase (290 aa).

A signal peptide spans 1-28 (MKYRKLIILVLSILIILPVSTLDGHHIA). The region spanning 114–290 (RSVWINFDDM…KRWDGFHEKD (177 aa)) is the NodB homology domain.

It belongs to the polysaccharide deacetylase family.

Its subcellular location is the secreted. The protein resides in the cell wall. Functionally, catalyzes the N-deacetylation of poly-beta-1,6-N-acetyl-D-glucosamine (PNAG, also referred to as PIA), a biofilm adhesin polysaccharide. N-deacetylation is crucial for attachment of the polysaccharide to the bacterial cell surface; it leads to the introduction of positive charges in the otherwise neutral PIA polymer, allowing electrostatic interactions. The chain is Poly-beta-1,6-N-acetyl-D-glucosamine N-deacetylase (icaB) from Staphylococcus aureus (strain MRSA252).